Consider the following 473-residue polypeptide: Tyrosine phenol-lyase (473 aa).

Lys257 bears the N6-(pyridoxal phosphate)lysine mark.

It belongs to the beta-eliminating lyase family. Homotetramer. Pyridoxal 5'-phosphate is required as a cofactor.

It catalyses the reaction L-tyrosine + H2O = phenol + pyruvate + NH4(+). This chain is Tyrosine phenol-lyase, found in Intrasporangium calvum (strain ATCC 23552 / DSM 43043 / JCM 3097 / NBRC 12989 / NCIMB 10167 / NRRL B-3866 / 7 KIP).